We begin with the raw amino-acid sequence, 6629 residues long: Replicase polyprotein 1ab (6629 aa).

Residues 1–1750 (MASSLKQGVS…VASYKTVLCK (1750 aa)) lie on the Cytoplasmic side of the membrane. In terms of domain architecture, Ubiquitin-like 1 spans 675–780 (KTVTFGETTV…SCHLIYRDYE (106 aa)). The tract at residues 783 to 802 (DDIEEEDAEECDTDSGEAEE) is disordered. Positions 1003–1179 (VKPATCEKPK…YFDVTCKQKT (177 aa)) constitute a Macro domain. In terms of domain architecture, Ubiquitin-like 2 spans 1175 to 1227 (CKQKTIYLTEDGVKYRSIVLKPGDSLGQFGQVYAKNKIVFTADDVEDKEILYV). The region spanning 1236–1497 (EYYGLDAQKY…SKSVKEDVSN (262 aa)) is the Peptidase C16 domain. Residue Cys-1274 is the For PL-PRO activity of the active site. Zn(2+) contacts are provided by Cys-1353, Cys-1355, Cys-1387, and Cys-1390. The C4-type; degenerate zinc finger occupies 1353–1390 (CNCGIKSYELRGLEACIQPVRATNLLHFKTQYSNCPTC). Active-site for PL-PRO activity residues include His-1437 and Asp-1448. Residues 1751–1771 (VVLATLLIVWFVYTSNPVMFT) traverse the membrane as a helical segment. The tract at residues 1751 to 1864 (VVLATLLIVW…KPVAGFVIIC (114 aa)) is HD1. One can recognise a 3Ecto domain in the interval 1769-1833 (MFTGIRVLDF…AYSVEQVYKD (65 aa)). Residues 1772-1843 (GIRVLDFLFE…AASGFIFNWN (72 aa)) lie on the Lumenal side of the membrane. 2 disulfides stabilise this stretch: Cys-1785–Cys-1811 and Cys-1802–Cys-1808. Residues 1844-1864 (WLYLVFLILFVKPVAGFVIIC) traverse the membrane as a helical segment. At 1865–2280 (YCVKYLVLNS…TFKCFKSYFK (416 aa)) the chain is on the cytoplasmic side. A Y1 region spans residues 1911 to 2001 (YIQVHHILYC…KLKRHVKPTA (91 aa)). The CoV Nsp3 Y domain occupies 1911 to 2263 (YIQVHHILYC…HTQKLLVEKK (353 aa)). Zn(2+) contacts are provided by His-1915, Cys-1920, Cys-1925, Cys-1928, Cys-1961, His-1964, Cys-1968, and Cys-1971. The segment at 1915 to 1928 (HHILYCKDVTCEVC) is ZF1. The segment at 1961-1971 (CKRHNWYCRNC) is ZF2. The segment at 2002 to 2104 (YAYHVVDEAC…ILDQALYEQL (103 aa)) is Y2. The segment at 2002–2263 (YAYHVVDEAC…HTQKLLVEKK (262 aa)) is coV-Y. The interval 2105-2163 (VVEPVSKSVIDKVCSILSSIISVDTAALNYKAGTLRDALLSITKDEEAVDMAIFCHNHD) is Y3. A Y4 region spans residues 2164-2263 (VDYTGDGFTN…HTQKLLVEKK (100 aa)). Residues 2281-2301 (WLLIFYILFTACCSGYYYMEV) form a helical membrane-spanning segment. Residues 2281-2664 (WLLIFYILFT…LACCYLGFII (384 aa)) form an HD2 region. Residues 2302–2559 (SKSFVHPMYD…FFTGVNPNIY (258 aa)) are Lumenal-facing. Residues 2560 to 2580 (MQLATMFLILVVVVLIFAMVI) traverse the membrane as a helical segment. Over 2581–2611 (KFQGVFKAYATTVFITMLVWVINAFILCVHS) the chain is Cytoplasmic. The helical transmembrane segment at 2612–2632 (YNSVLAVILLVLYCYASLVTS) threads the bilayer. At 2633 to 2643 (RNTVIIMHCWL) the chain is on the lumenal side. Residues 2644 to 2664 (VFTFGLIVPTWLACCYLGFII) traverse the membrane as a helical segment. Residues 2665–3096 (YMYTPLFLWC…SSFVRKATSW (432 aa)) lie on the Cytoplasmic side of the membrane. Residues 2684-2779 (LYDGNEFVGN…RYSIGVSRLQ (96 aa)) form the Nsp4C domain. A Peptidase C30 domain is found at 2780-3086 (SGFKKLVSPS…FNQIGGVRLQ (307 aa)). Residues His-2820 and Cys-2922 each act as for 3CL-PRO activity in the active site. The chain crosses the membrane as a helical span at residues 3097–3117 (FWSRCVLACFLFVLCAIVLFT). The interval 3097-3317 (FWSRCVLACF…WLCTCYFGLY (221 aa)) is HD3. The Lumenal portion of the chain corresponds to 3118-3121 (AVPL). The chain crosses the membrane as a helical span at residues 3122 to 3142 (KFYVYAAVILLMAVLFISFTV). Topologically, residues 3143–3151 (KHVMAYMDT) are cytoplasmic. Residues 3152–3172 (FLLPTLITVIIGVCAEVPFIY) traverse the membrane as a helical segment. Over 3173-3188 (NTLISQVVIFLSQWYD) the chain is Lumenal. Residues 3189–3209 (PVVFDTMVPWMFLPLVLYTAF) traverse the membrane as a helical segment. Residues 3210–3257 (KCVQGCYMNSFNTSLLMLYQFVKLGFVIYTSSNTLTAYTEGNWELFFE) are Cytoplasmic-facing. The chain crosses the membrane as a helical span at residues 3258–3278 (LVHTTVLANVSSNSLIGLFVF). At 3279–3296 (KCAKWMLYYCNATYLNNY) the chain is on the lumenal side. A helical transmembrane segment spans residues 3297-3317 (VLMAVMVNCIGWLCTCYFGLY). Topologically, residues 3318–6629 (WWVNKVFGLT…FTSDSFVCTM (3312 aa)) are cytoplasmic. The RdRp Nsp7 cofactor domain occupies 3380 to 3462 (AKLSDVKCTT…DILKRSTVLQ (83 aa)). Residues 3463 to 3672 (SVTQEFSHIP…GHNKVDVVLQ (210 aa)) enclose the RdRp Nsp8 cofactor domain. The region spanning 3673-3783 (NNELMPHGVK…GAISNVVVLQ (111 aa)) is the Nsp9 ssRNA-binding domain. Positions 3785-3926 (KGHETEEVDA…CDSLRQPKSS (142 aa)) constitute an ExoN/MTase coactivator domain. The Zn(2+) site is built by Cys-3858, Cys-3861, His-3867, Cys-3878, Cys-3904, Cys-3907, Cys-3915, and Cys-3917. 2 zinc fingers span residues 3858 to 3878 (CLYC…DGRC) and 3904 to 3917 (CTVC…GCQC). One can recognise a NiRAN domain in the interval 3940 to 4198 (YLNRVRGSSE…APERYFEYDV (259 aa)). The Nsp12 Interface domain occupies 4203-4301 (KSYDLLKYDY…MNQDNTMSFS (99 aa)). Residues His-4232, Cys-4238, Cys-4243, Cys-4247, and Cys-4424 each contribute to the Zn(2+) site. The 567-residue stretch at 4302 to 4868 (KMGLSQLMQF…NMYRAPTTLQ (567 aa)) folds into the Nsp12 RNA-dependent RNA polymerase domain. The segment at 4304–4517 (GLSQLMQFVG…HQKILKSIVN (214 aa)) is rdRp Fingers N-ter. The rdRp Palm N-ter stretch occupies residues 4518 to 4556 (TRNASVVIGTTKFYGGWDNMLRNLIQGVEDPILMGWDYP). Positions 4548–4710 (PILMGWDYPK…CYNNTLAKQG (163 aa)) constitute a RdRp catalytic domain. Residues 4557–4615 (KCDRAMPNLLRIAASLVLARKHTNCCSWSERIYRLYNECAQVLSETVLATGGIYVKPGG) are rdRp Fingers C-ter. Positions 4578, 4581, and 4582 each coordinate Zn(2+). The tract at residues 4616 to 4751 (TSSGDATTAY…EKGPHEFCSQ (136 aa)) is rdRp Palm C-ter. Residues Ser-4695, Asp-4696, and Asp-4697 contribute to the active site. The rdRp Thumb stretch occupies residues 4752 to 4868 (HTMLVEVDGE…NMYRAPTTLQ (117 aa)). Positions 4869–4981 (SCGVCVVCNS…DDFNQLATTN (113 aa)) constitute a CV ZBD domain. 12 residues coordinate Zn(2+): Cys-4873, Cys-4876, Cys-4884, Cys-4887, Cys-4894, Cys-4897, His-4901, His-4907, Cys-4918, Cys-4923, Cys-4940, and His-4943. One can recognise a (+)RNA virus helicase ATP-binding domain in the interval 5125–5305 (MVPECFVNNI…MVCVKPDIFL (181 aa)). Residue 5150-5157 (GPPGSGKS) participates in ATP binding. One can recognise a (+)RNA virus helicase C-terminal domain in the interval 5306–5477 (AKCYRCPKEI…QGTGLFKICN (172 aa)). The 215-residue stretch at 5539–5753 (MFITRDEAIR…RCLAINNAFC (215 aa)) folds into the ExoN domain. Catalysis depends on residues Asp-5557, Glu-5559, and Glu-5658. Residues Cys-5674, Cys-5676, Cys-5692, His-5695, His-5723, Cys-5727, and His-5730 each coordinate Zn(2+). Active-site residues include His-5734 and Asp-5739. Cys-5745 contacts Zn(2+). One can recognise an N7-MTase domain in the interval 5762-5989 (YPHIANEDEV…NLWKSFSALQ (228 aa)). 5797–5803 (DIGNPKG) is a binding site for S-adenosyl-L-methionine. A gpppA-binding region spans residues 5877 to 5891 (CNGGSLYVNKHAFYT). Zn(2+) contacts are provided by Cys-5915, Cys-5935, Cys-5946, and His-5949. The Nsp15 N-terminal oligomerization domain occupies 5990 to 6050 (SIDNIAYNMY…SVAFELYAKR (61 aa)). In terms of domain architecture, AV-Nsp11N/CoV-Nsp15M spans 6051-6166 (NIRTLPNNRI…VYKRVNGAFV (116 aa)). Positions 6183-6324 (EPRSDIERDF…EDGSIKTCYP (142 aa)) constitute a NendoU domain. Residues His-6212, His-6227, Lys-6267, Lys-6371, Asp-6455, Lys-6499, and Glu-6532 contribute to the active site. In terms of domain architecture, Nidovirus-type SAM-dependent 2'-O-MTase spans 6327–6626 (QSAWTCGYNM…NTSFTSDSFV (300 aa)).

It belongs to the coronaviruses polyprotein 1ab family. In terms of assembly, interacts with host PHB and PHB2. As to quaternary structure, interacts with papain-like protease and non-structural protein 6. Monomer. Homodimer. Only the homodimer shows catalytic activity. In terms of assembly, eight copies of nsp7 and eight copies of nsp8 assemble to form a heterohexadecamer dsRNA-encircling ring structure. As to quaternary structure, eight copies of nsp7 and eight copies of nsp8 assemble to form a heterohexadecamer dsRNA-encircling ring structure. Interacts with ORF6 protein. Homodimer. In terms of assembly, homododecamer. Interacts with proofreading exoribonuclease nsp14 and 2'-O-methyltransferase nsp16; these interactions enhance nsp14 and nsp16 enzymatic activities. As to quaternary structure, interacts with host DDX1 (via C-terminus). Interacts with non-structural protein 10. Homohexamer. In terms of assembly, interacts with non-structural protein 10. Mn(2+) serves as cofactor. The cofactor is Zn(2+). In terms of processing, specific enzymatic cleavages in vivo by its own proteases yield mature proteins. 3C-like proteinase nsp5 liberates nsps 6-16 from the polyprotein. Papain-like and 3C-like proteinases are autocatalytically processed. N-glycosylated.

Its subcellular location is the host endoplasmic reticulum membrane. The protein localises to the host cytoplasm. It localises to the host perinuclear region. The protein resides in the host endoplasmic reticulum. It is found in the host endoplasmic reticulum-Golgi intermediate compartment. It carries out the reaction Thiol-dependent hydrolysis of ester, thioester, amide, peptide and isopeptide bonds formed by the C-terminal Gly of ubiquitin (a 76-residue protein attached to proteins as an intracellular targeting signal).. The enzyme catalyses RNA(n) + a ribonucleoside 5'-triphosphate = RNA(n+1) + diphosphate. The catalysed reaction is ATP + H2O = ADP + phosphate + H(+). It catalyses the reaction uridylyl-uridylyl-ribonucleotide-RNA = a 3'-end uridylyl-2',3'-cyclophospho-uridine-RNA + a 5'-end dephospho-ribonucleoside-RNA. It carries out the reaction a 5'-end diphospho-ribonucleoside in mRNA + GTP + H(+) = a 5'-end (5'-triphosphoguanosine)-ribonucleoside in mRNA + diphosphate. The enzyme catalyses a 5'-end (N(7)-methyl 5'-triphosphoguanosine)-ribonucleoside in mRNA + S-adenosyl-L-methionine = a 5'-end (N(7)-methyl 5'-triphosphoguanosine)-(2'-O-methyl-ribonucleoside) in mRNA + S-adenosyl-L-homocysteine + H(+). In terms of biological role, multifunctional protein involved in the transcription and replication of viral RNAs. Contains the proteinases responsible for the cleavages of the polyprotein. Its function is as follows. May play a role in the modulation of host cell survival signaling pathway by interacting with host PHB and PHB2. Indeed, these two proteins play a role in maintaining the functional integrity of the mitochondria and protecting cells from various stresses. Responsible for the cleavages located at the N-terminus of the replicase polyprotein. In addition, PL-PRO possesses a deubiquitinating/deISGylating activity and processes both 'Lys-48'- and 'Lys-63'-linked polyubiquitin chains from cellular substrates. Functionally, plays a role in host membrane rearrangement that leads to creation of cytoplasmic double-membrane vesicles (DMV) necessary for viral replication. Alone is able to induce paired membranes. Coexpression of nsp3 and nsp4 does not result in the formation of DMVs. In terms of biological role, responsible for the majority of cleavages as it cleaves the C-terminus of replicase polyprotein at 11 sites. Recognizes substrates containing the core sequence [ILMVF]-Q-|-[SGACN]. Inhibited by the substrate-analog Cbz-Val-Asn-Ser-Thr-Leu-Gln-CMK. Its function is as follows. Forms a hexadecamer with nsp8 (8 subunits of each) that may participate in viral replication by acting as a primase. Alternatively, may synthesize substantially longer products than oligonucleotide primers. Forms a hexadecamer with nsp7 (8 subunits of each) that may participate in viral replication by acting as a primase. Alternatively, may synthesize substantially longer products than oligonucleotide primers. Functionally, forms a primer, NSP9-pU, which is utilized by the polymerase for the initiation of RNA chains. Interacts with ribosome signal recognition particle RNA (SRP). Together with NSP8, suppress protein integration into the cell membrane, thereby disrupting host immune defenses. In terms of biological role, plays a pivotal role in viral transcription by stimulating both nsp14 3'-5' exoribonuclease and nsp16 2'-O-methyltransferase activities. Therefore plays an essential role in viral mRNAs cap methylation. Its function is as follows. RNA-directed RNA polymerase that catalyzes the transcription of viral genomic and subgenomic RNAs. Acts in complex with nsp7 and nsp8 to transcribe both the minus and positive strands of genomic RNA. The kinase-like NiRAN domain of NSP12 attaches one or more nucleotides to the amino terminus of NSP9, forming a covalent RNA-protein intermediate that serves as transcription/replication primer. Subgenomic RNAs (sgRNAs) are formed by discontinuous transcription: The polymerase has the ability to pause at transcription-regulating sequences (TRS) and jump to the leader TRS, resulting in a major deletion. This creates a series of subgenomic RNAs that are replicated, transcribed and translated. In addition, Nsp12 is a subunit of the viral RNA capping enzyme that catalyzes the RNA guanylyltransferase reaction for genomic and sub-genomic RNAs. Subsequently, the NiRAN domain transfers RNA to GDP, and forms the core cap structure GpppA-RNA. Multi-functional protein with a zinc-binding domain in N-terminus displaying RNA and DNA duplex-unwinding activities with 5' to 3' polarity. Activity of helicase is dependent on magnesium. Functionally, enzyme possessing two different activities: an exoribonuclease activity acting on both ssRNA and dsRNA in a 3' to 5' direction and a N7-guanine methyltransferase activity. Acts as a proofreading exoribonuclease for RNA replication, thereby lowering The sensitivity of the virus to RNA mutagens. In terms of biological role, plays a role in viral transcription/replication and prevents the simultaneous activation of host cell dsRNA sensors, such as MDA5/IFIH1, OAS, and PKR. Acts by degrading the 5'-polyuridines generated during replication of the poly(A) region of viral genomic and subgenomic RNAs. Catalyzes a two-step reaction in which a 2'3'-cyclic phosphate (2'3'-cP) is first generated by 2'-O transesterification, which is then hydrolyzed to a 3'-phosphate (3'-P). If not degraded, poly(U) RNA would hybridize with poly(A) RNA tails and activate host dsRNA sensors. Its function is as follows. Methyltransferase that mediates mRNA cap 2'-O-ribose methylation to the 5'-cap structure of viral mRNAs. N7-methyl guanosine cap is a prerequisite for binding of nsp16. Therefore plays an essential role in viral mRNAs cap methylation which is essential to evade immune system. The polypeptide is Replicase polyprotein 1ab (rep) (Gallus gallus (Chicken)).